The primary structure comprises 1213 residues: tRNA wybutosine-synthesizing protein 4 (1213 aa).

Composition is skewed to low complexity over residues 1 to 13 (METT…PATT) and 39 to 52 (ATTT…TTPT). Positions 1–76 (METTEEVVAP…DDQVMGTNNS (76 aa)) are disordered. The segment covering 53–67 (HNEHASAKDPRKAQD) has biased composition (basic and acidic residues). S-adenosyl-L-methionine contacts are provided by Arg-117, Gly-148, and Asp-180. Over residues 215-248 (STPAATTTAAATTTTTTELKTTAATASSTSTEAP) the composition is skewed to low complexity. Residues 215–272 (STPAATTTAAATTTTTTELKTTAATASSTSTEAPQKPKKSPKPKDKSKAARAPAPTTA) form a disordered region. S-adenosyl-L-methionine contacts are provided by residues 289 to 290 (DL) and Glu-318. Residues 879 to 900 (EPRSLPLRNQAPNGAEGNANGS) form a disordered region. Positions 1006–1166 (PTEKPAVLSD…YAAGKDVYGN (161 aa)) constitute a JmjC domain.

This sequence belongs to the methyltransferase superfamily. LCMT family.

It catalyses the reaction 7-[(3S)-3-amino-3-carboxypropyl]wyosine(37) in tRNA(Phe) + S-adenosyl-L-methionine = 7-[(3S)-(3-amino-3-methoxycarbonyl)propyl]wyosine(37) in tRNA(Phe) + S-adenosyl-L-homocysteine. The catalysed reaction is 7-[(3S)-(3-amino-3-methoxycarbonyl)propyl]wyosine(37) in tRNA(Phe) + S-adenosyl-L-methionine + CO2 = wybutosine(37) in tRNA(Phe) + S-adenosyl-L-homocysteine + 2 H(+). The protein operates within tRNA modification; wybutosine-tRNA(Phe) biosynthesis. Its function is as follows. Probable S-adenosyl-L-methionine-dependent methyltransferase that acts as a component of the wybutosine biosynthesis pathway. Wybutosine is a hyper modified guanosine with a tricyclic base found at the 3'-position adjacent to the anticodon of eukaryotic phenylalanine tRNA. May methylate the carboxyl group of leucine residues to form alpha-leucine ester residues. The sequence is that of tRNA wybutosine-synthesizing protein 4 (lcm-2) from Neurospora crassa (strain ATCC 24698 / 74-OR23-1A / CBS 708.71 / DSM 1257 / FGSC 987).